A 702-amino-acid polypeptide reads, in one-letter code: Serotransferrin-A (702 aa).

A signal peptide spans 1-19; that stretch reads MDLSLRVALCLSMLALCLA. Transferrin-like domains lie at 26–340 and 353–685; these read VRWC…ALKE and VRWC…SLNK. 2 disulfide bridges follow: cysteine 29-cysteine 64 and cysteine 39-cysteine 55. Positions 79 and 111 each coordinate Fe(3+). Disulfide bonds link cysteine 134-cysteine 217, cysteine 179-cysteine 192, and cysteine 245-cysteine 259. Hydrogencarbonate is bound by residues threonine 136, lysine 140, alanine 142, and glycine 143. Tyrosine 211 is a binding site for Fe(3+). Position 267 (histidine 267) interacts with Fe(3+). The segment at 340–349 is connecting region; it reads EGVKEDDSAA. Intrachain disulfides connect cysteine 356/cysteine 388 and cysteine 366/cysteine 379. Aspartate 403 and tyrosine 442 together coordinate Fe(3+). 7 disulfide bridges follow: cysteine 413/cysteine 697, cysteine 431/cysteine 658, cysteine 465/cysteine 544, cysteine 489/cysteine 686, cysteine 499/cysteine 513, cysteine 510/cysteine 527, and cysteine 584/cysteine 598. Hydrogencarbonate contacts are provided by threonine 467, arginine 471, alanine 473, and glycine 474. Tyrosine 538 provides a ligand contact to Fe(3+). Histidine 606 lines the Fe(3+) pocket.

It belongs to the transferrin family. Monomer. As to expression, plasma.

It localises to the secreted. Functionally, transferrins are iron binding transport proteins which can bind two Fe(3+) ions in association with the binding of an anion, usually bicarbonate. It is responsible for the transport of iron from sites of absorption and heme degradation to those of storage and utilization. Serum transferrin may also have a further role in stimulating cell proliferation. This is Serotransferrin-A (tf-a) from Xenopus laevis (African clawed frog).